Consider the following 583-residue polypeptide: Trehalase (583 aa).

The first 23 residues, 1-23, serve as a signal peptide directing secretion; sequence MPGRTWELCLLLLLGLGLGSQEA. The N-linked (GlcNAc...) asparagine glycan is linked to Asn-78. Substrate is bound by residues Arg-168, 175-176, Asn-212, and 221-223; these read WD and RSQ. N-linked (GlcNAc...) asparagine glycans are attached at residues Asn-239 and Asn-261. Substrate is bound by residues 286-288 and Gly-319; that span reads RPE. Asp-321 serves as the catalytic Proton donor/acceptor. A glycan (N-linked (GlcNAc...) asparagine) is linked at Asn-369. Glu-514 serves as the catalytic Proton donor/acceptor. Glu-529 contacts substrate. Ser-556 carries GPI-anchor amidated serine lipidation. The propeptide at 557–583 is removed in mature form; sequence GAKLAFLEPHCLAATLLPSLLLSLLPW.

Belongs to the glycosyl hydrolase 37 family. As to quaternary structure, homodimer; disulfide-linked. In terms of tissue distribution, expressed in kidney, liver and small intestine. Also more weakly expressed in pancreas.

It localises to the cell membrane. It catalyses the reaction alpha,alpha-trehalose + H2O = alpha-D-glucose + beta-D-glucose. In terms of biological role, intestinal trehalase is probably involved in the hydrolysis of ingested trehalose. This Homo sapiens (Human) protein is Trehalase.